Reading from the N-terminus, the 181-residue chain is Ferritin BfrB (181 aa).

Positions 15–150 constitute a Ferritin-like diiron domain; it reads MQEQIHNEFT…TLVRVADRAG (136 aa). Positions 22, 55, 58, 99, and 132 each coordinate Fe cation.

This sequence belongs to the ferritin family. Prokaryotic subfamily. As to quaternary structure, homooligomer of 24 subunits that are packed together to form an approximately spherical molecule with a central cavity, in which large amounts of iron can be stored.

The catalysed reaction is 4 Fe(2+) + O2 + 4 H(+) = 4 Fe(3+) + 2 H2O. In terms of biological role, iron-storage protein that displays ferroxidase activity, catalyzing the oxidation of Fe(2+) ions into Fe(3+) ions, that can then be deposited as a ferric-oxide mineral core within the central cavity of the protein complex. This chain is Ferritin BfrB (bfrB), found in Mycobacterium tuberculosis (strain ATCC 35801 / TMC 107 / Erdman).